The sequence spans 758 residues: G-protein alpha subunit activating protein gbas-1 (758 aa).

Over residues 30–48 the composition is skewed to acidic residues; the sequence is LDEVDNADFEREDDEEEVL. Residues 30 to 70 form a disordered region; it reads LDEVDNADFEREDDEEEVLSEPSESPYTSTPKSSKRVNKTR. Residues 49–61 are compositionally biased toward low complexity; the sequence is SEPSESPYTSTPK. Positions 653 to 666 match the GBA motif; it reads ETVTVEEFLMNSYS. The disordered stretch occupies residues 668–690; sequence AAPSTSTAPAPPKAPVTAPPAPQ. Over residues 676–689 the composition is skewed to pro residues; that stretch reads PAPPKAPVTAPPAP.

Interacts (via GBA motif) with guanine nucleotide-binding protein G(o) subunit alpha goa-1 (in GDP-bound form); the interaction leads to activation of goa-1. In terms of tissue distribution, expressed in some neurons including the head and tail neurons, HSN and VC, in a subset of glial cells, in the distal tips cells and in the intestine.

Acts as a non-receptor guanine nucleotide exchange factor which binds to and activates G-protein alpha subunit goa-1. The protein is G-protein alpha subunit activating protein gbas-1 of Caenorhabditis elegans.